The chain runs to 56 residues: TauPI-stichotoxin-Hcr2c (56 aa).

In terms of domain architecture, BPTI/Kunitz inhibitor spans 4 to 54 (CLEPKVVGPCTAYFRRFYFDSETGKCTPFIYGGCEGNGNNFETLRACRAIC). Disulfide bonds link Cys-4-Cys-54, Cys-13-Cys-37, and Cys-29-Cys-50.

Belongs to the venom Kunitz-type family. Sea anemone type 2 potassium channel toxin subfamily.

The protein localises to the secreted. It localises to the nematocyst. This protease inhibitor shows two different activities, it inhibits both the capsaicin receptor TRPV1 and serine proteases. It partially (max 50%) and reversibly inhibits mammalian TRPV1, a non-selective cation channel expressed by sensory neurons of the pain pathway). The second activity is a weak inhibition of trypsin and chymotrypsin activity (Ki=0.9 uM and Ki=4.5 uM, respectively). In vivo, shows analgesic effects on mammals. This chain is TauPI-stichotoxin-Hcr2c, found in Radianthus crispa (Leathery sea anemone).